The sequence spans 298 residues: Aclacinomycin methylesterase RdmC (298 aa).

The 254-residue stretch at 24 to 277 (PALLLVMGGN…LAEIPGMGHA (254 aa)) folds into the AB hydrolase-1 domain. Active-site residues include serine 102, aspartate 248, and histidine 276.

This sequence belongs to the AB hydrolase superfamily. Hydrolase RdmC family. Monomer.

The catalysed reaction is aclacinomycin T + H2O = 15-demethylaclacinomycin T + methanol. It functions in the pathway antibiotic biosynthesis; aclacinomycin biosynthesis. Its function is as follows. Involved in the biosynthesis of the anthracycline aclacinomycin which is an aromatic polyketide antibiotic that exhibits high cytotoxicity and is widely applied in the chemotherapy of a variety of cancers. Catalyzes the removal of the methoxy group from the C-15 position of aclacinomycin T and A to yield 15-demethoxyaclacinomycin T and A, respectively. The sequence is that of Aclacinomycin methylesterase RdmC (rdmC) from Streptomyces purpurascens.